Consider the following 782-residue polypeptide: MVANNKGLLIAGLLLSVIGAALFVISLALLPSVLNVATNNAIVDAVIVDSFKSQRYNDWAGQKSVDNYFKQYYYLWNLTNPNEVLNGKNCNFEKIGPFNYKYEWNNSKVSFSDDGNLINYIQSKSYKWIEGEDSLNPFTVSTTNFNPAYLGLLSTLSKNSITLGMTAEDLLYTLASAPQTKQFLEYLSSDNFTMIAYFYNGPKYFNQQYQLLLSTINNNLTTTPTIYFLEQWSNSTIIPTNGNSSLWDNMLISYGLDSPSGISLQSALEILNPMNQYSLLNSTNGISYWINAVFNGPNSNSYQILEQELGINQAQLTLVMIWWLKGFNDQYTMSQLLKQCEIESIELLGVCQFITTIPLGYKSISQFNITNLPWLEPIEIPIAMGTNLTISTNEAQSNLFNDSIDDSLLTIHGLGLFLEQMSTNSNNFTKWNLTNNDAMTMIGYFLSYIPNTTGYSIKSVQSFYNTSGLIVTRTANEWLWDCQDDLLDYLGIDQQCSFQQNNTIFKPSTVYTGKKDLSLTNQYQQFQEQSTLTIWNGTVNVTGFVENGQMAPLVQDNLPQSLTIFEENILRPLSLVHSSSSSVMGVSTQRYYLPNQSFPIDPVFNNSINGFANLTGLFNGVPIYVSLWDMYGVPIEYSSLYINGLNQTYENAEIPLDLEPITGNTLYYNLKLQINLQIPSNANSLWFSSLGNWTNIFSPTNSNSFGIFYPSLKIGQTATASTNDINLLKQQFKQIQTVKIAPVVVVSIFGGILLIAGLVMAINGFRKTFYNNNQYNGYNIIN.

Topologically, residues 1–7 are cytoplasmic; that stretch reads MVANNKG. A helical transmembrane segment spans residues 8–28; that stretch reads LLIAGLLLSVIGAALFVISLA. Residues 29 to 739 are Lumenal-facing; that stretch reads LLPSVLNVAT…QQFKQIQTVK (711 aa). Residues asparagine 77, asparagine 105, asparagine 191, asparagine 219, asparagine 234, asparagine 243, asparagine 281, asparagine 368, asparagine 387, asparagine 401, asparagine 427, asparagine 432, asparagine 451, asparagine 465, asparagine 501, asparagine 536, asparagine 540, asparagine 595, asparagine 605, asparagine 613, asparagine 646, and asparagine 692 are each glycosylated (N-linked (GlcNAc...) asparagine). Residues 740–760 traverse the membrane as a helical segment; the sequence is IAPVVVVSIFGGILLIAGLVM. Residues 761–782 are Cytoplasmic-facing; the sequence is AINGFRKTFYNNNQYNGYNIIN. Residues 777-781 carry the Tyrosine-type lysosomal sorting signal motif; sequence GYNII.

It belongs to the CD36 family. Post-translationally, heavily glycosylated.

It is found in the lysosome membrane. May act as a lysosomal receptor. May be involved role in macropinocytosis and fluid phase exocytosis. This is Lysosome membrane protein 2-C (lmpC) from Dictyostelium discoideum (Social amoeba).